A 410-amino-acid chain; its full sequence is Peptidase T (410 aa).

H79 contacts Zn(2+). Residue D81 is part of the active site. D142 is a Zn(2+) binding site. Catalysis depends on E176, which acts as the Proton acceptor. The Zn(2+) site is built by E177, D199, and H381.

Belongs to the peptidase M20B family. Zn(2+) is required as a cofactor.

Its subcellular location is the cytoplasm. The catalysed reaction is Release of the N-terminal residue from a tripeptide.. In terms of biological role, cleaves the N-terminal amino acid of tripeptides. This chain is Peptidase T, found in Bacillus velezensis (strain DSM 23117 / BGSC 10A6 / LMG 26770 / FZB42) (Bacillus amyloliquefaciens subsp. plantarum).